Here is a 169-residue protein sequence, read N- to C-terminus: Large ribosomal subunit protein uL18 (169 aa).

It belongs to the universal ribosomal protein uL18 family. Part of the 50S ribosomal subunit. Contacts the 5S and 23S rRNAs.

Functionally, this is one of the proteins that bind and probably mediate the attachment of the 5S RNA into the large ribosomal subunit, where it forms part of the central protuberance. The polypeptide is Large ribosomal subunit protein uL18 (Methanothrix thermoacetophila (strain DSM 6194 / JCM 14653 / NBRC 101360 / PT) (Methanosaeta thermophila)).